The following is a 122-amino-acid chain: Putative 2'-deoxynucleoside 5'-phosphate N-hydrolase 1 (122 aa).

Substrate-binding positions include 4 to 10, tyrosine 19, histidine 37, glutamate 83, and 105 to 107; these read FLSGSIR and SAM.

Belongs to the 2'-deoxynucleoside 5'-phosphate N-hydrolase 1 family. Monomer and homodimer.

It catalyses the reaction a pyrimidine 2'-deoxyribonucleoside 5'-phosphate + H2O = a pyrimidine nucleobase + 2-deoxy-D-ribose 5-phosphate. It carries out the reaction a purine 2'-deoxyribonucleoside 5'-phosphate + H2O = a purine nucleobase + 2-deoxy-D-ribose 5-phosphate. Its function is as follows. Catalyzes the cleavage of the N-glycosidic bond of deoxyribonucleoside 5'-monophosphates to yield deoxyribose 5-phosphate and a purine or pyrimidine base. This Methanococcoides burtonii (strain DSM 6242 / NBRC 107633 / OCM 468 / ACE-M) protein is Putative 2'-deoxynucleoside 5'-phosphate N-hydrolase 1.